Consider the following 200-residue polypeptide: uncharacterized protein (200 aa).

This is an uncharacterized protein from Ostreid herpesvirus 1 (isolate France) (OsHV-1).